The following is a 128-amino-acid chain: uncharacterized protein (128 aa).

Positions 1 to 26 (MNSATSETTTNTGAAETTTSTGAAET) are disordered. The helical transmembrane segment at 105 to 127 (IANGLLTNNGISVFISTVLLAIV) threads the bilayer.

The protein belongs to the flocculin family.

The protein resides in the membrane. This is an uncharacterized protein from Saccharomyces cerevisiae (strain ATCC 204508 / S288c) (Baker's yeast).